The sequence spans 500 residues: Cytochrome P450 71D7 (500 aa).

Cysteine 441 contributes to the heme binding site.

Belongs to the cytochrome P450 family. Heme is required as a cofactor.

This chain is Cytochrome P450 71D7 (CYP71D7), found in Solanum chacoense (Chaco potato).